We begin with the raw amino-acid sequence, 307 residues long: Zygote arrest protein 2.L (307 aa).

The disordered stretch occupies residues 138–200 (LPQGGRLPKK…EEPGNEEQTK (63 aa)). Basic and acidic residues predominate over residues 156–186 (LKERAPSPEDKEREKVSEKEPDTKDELEKRP). A 3CxxC-type zinc finger spans residues 208-293 (QKYGYFHCKD…QELCGRCKNK (86 aa)).

Belongs to the ZAR1 family. Expressed in oocytes.

The protein resides in the cytoplasm. The protein localises to the cytoplasmic ribonucleoprotein granule. In terms of biological role, mRNA-binding protein required for maternal mRNA storage, translation and degradation during oocyte maturation. Probably promotes formation of some phase-separated membraneless compartment that stores maternal mRNAs in oocytes: acts by undergoing liquid-liquid phase separation upon binding to maternal mRNAs. Binds to the 3'-UTR of maternal mRNAs, inhibiting their translation. The chain is Zygote arrest protein 2.L (zar2.L) from Xenopus laevis (African clawed frog).